A 1915-amino-acid polypeptide reads, in one-letter code: Ankyrin repeat domain-containing protein 36A (1915 aa).

ANK repeat units lie at residues 31-60 (YHLKRIHRAVLHGNLEKLKYLLLTYYDANK), 64-93 (KERTALHLACATGQPEMVHLLVSRRCELNL), 97-126 (EDRTPLIKAVQLRQEACATLLLQNGANPNI), 130-159 (FGRTALHYAVYNEDTSMIEKLLSHGTNIEE), 163-192 (CEYQPLLFAVSRRKVKMVEFLLKKKANVNA), and 196-225 (LGRSALIHAVTLGEKDIVILLLQHNIDVLS). 5 disordered regions span residues 261–331 (PINS…DEQK), 470–619 (ATGQ…QKQS), 639–663 (MGGGKSGTVSSQKQPASKATSDKTD), 676–1203 (LQCG…KATS), and 1285–1304 (KDVQTSTPAEQDLEMASEGE). Composition is skewed to polar residues over residues 262–272 (INSNPVSSQKQ) and 297–306 (KSGTVSSQKQ). A compositionally biased stretch (low complexity) spans 505-521 (SLTSSEESSERPPLSTL). 2 stretches are compositionally biased toward basic and acidic residues: residues 551–562 (PAEKATSDDKDS) and 585–596 (PAEKATSDEKDS). 2 stretches are compositionally biased toward polar residues: residues 597 to 619 (VSNIATEIKKGQQSGTVSPQKQS) and 645 to 657 (GTVSSQKQPASKA). 7 stretches are compositionally biased toward basic and acidic residues: residues 806-815 (RENKDGEKSR), 874-883 (RENKDGEKSR), 931-951 (SDEKDSFSNITREKKDGEISR), 976-985 (RENKDGEKSR), 1044-1053 (RENKDGEKSR), 1100-1121 (TSDEKDSVLYIAREKKDGEKSR), and 1134-1152 (ICDKEDSVPNMATEKKDEQ). The segment covering 1175-1196 (VSNIPTEIKDGQQSGTVSSQKQ) has biased composition (polar residues). Coiled coils occupy residues 1383-1466 (IKLK…TEEQ), 1504-1531 (KEDLLHENRLMQDEIARLRLEKDTIKNQ), 1573-1614 (LAAL…ARCD), and 1727-1814 (NMLL…KRDD). Positions 1489–1508 (KTGGNNSNQVSETDEKEDLL) are disordered.

Belongs to the ANKRD36 family.

The chain is Ankyrin repeat domain-containing protein 36A (ANKRD36) from Homo sapiens (Human).